We begin with the raw amino-acid sequence, 503 residues long: Asparagine--tRNA ligase (503 aa).

Belongs to the class-II aminoacyl-tRNA synthetase family. As to quaternary structure, homodimer.

The protein resides in the cytoplasm. The catalysed reaction is tRNA(Asn) + L-asparagine + ATP = L-asparaginyl-tRNA(Asn) + AMP + diphosphate + H(+). In Aster yellows witches'-broom phytoplasma (strain AYWB), this protein is Asparagine--tRNA ligase.